Reading from the N-terminus, the 80-residue chain is Conotoxin Cl10.1 (80 aa).

A signal peptide spans 1–20 (MTTLGMTMLVLLLLLPLATC). Positions 21 to 36 (LGDGERSPWDSLLRAL) are excised as a propeptide.

Post-translationally, contains 4 disulfide bonds. As to expression, expressed by the venom duct.

It is found in the secreted. This chain is Conotoxin Cl10.1, found in Californiconus californicus (California cone).